The following is a 262-amino-acid chain: Putative protein-methionine-sulfoxide reductase subunit YedZ1 (262 aa).

It belongs to the MsrP family.

Functionally, part of the YedY1-YedZ1 system that may repair oxidized proteins containing methionine sulfoxide residues (Met-O). The polypeptide is Putative protein-methionine-sulfoxide reductase subunit YedZ1 (Azospira oryzae (strain ATCC BAA-33 / DSM 13638 / PS) (Dechlorosoma suillum)).